The sequence spans 266 residues: Lectin 7 (266 aa).

Residues 1 to 27 form the signal peptide; that stretch reads MAINTSRTQILFITIISFLILAQNVNS. Asparagine 121, asparagine 205, and asparagine 219 each carry an N-linked (GlcNAc...) asparagine glycan.

This sequence belongs to the leguminous lectin family.

Its function is as follows. May be involved in arbuscular mycorrhizal (AM) symbiosis with AM fungi. This Medicago truncatula (Barrel medic) protein is Lectin 7.